A 39-amino-acid chain; its full sequence is Omega-theraphotoxin-Ba1a (39 aa).

Disulfide bonds link C4-C25, C8-C31, and C17-C36.

This sequence belongs to the neurotoxin 12 (Hwtx-2) family. 06 (TXP1) subfamily. In terms of tissue distribution, expressed by the venom gland.

It localises to the secreted. Inhibits voltage-gated calcium channels (Cav) in rat cerebellar granule cells. Has insecticidal activity to crickets (Acheta domesticus). Is not toxic to mice. The sequence is that of Omega-theraphotoxin-Ba1a from Brachypelma albiceps (Mexican golden redrump tarantula).